The primary structure comprises 1343 residues: Xanthine dehydrogenase (1343 aa).

The 2Fe-2S ferredoxin-type domain occupies 8–95; sequence SELVFFVNGK…GCAVTTVEGI (88 aa). [2Fe-2S] cluster is bound by residues Cys47, Cys52, Cys55, Cys77, Cys117, Cys120, Cys152, and Cys154. Residues 235–424 form the FAD-binding PCMH-type domain; sequence FSSERVTWYR…LGIHFQKTTP (190 aa). Residues 263-270, Phe343, 353-357, Asp366, Leu414, and Lys432 each bind FAD; these read LVVGNTEV and CLGGN. Residues Gln780 and Phe811 each coordinate Mo-molybdopterin. The substrate site is built by Glu815 and Arg893. Arg925 is a binding site for Mo-molybdopterin. Phe927 contacts substrate. Ala1092 contributes to the Mo-molybdopterin binding site. Glu1275 serves as the catalytic Proton acceptor.

Belongs to the xanthine dehydrogenase family. Homodimer. FAD serves as cofactor. Requires Mo-molybdopterin as cofactor. It depends on [2Fe-2S] cluster as a cofactor.

It localises to the peroxisome. The catalysed reaction is xanthine + NAD(+) + H2O = urate + NADH + H(+). It carries out the reaction hypoxanthine + NAD(+) + H2O = xanthine + NADH + H(+). Key enzyme in purine degradation. Catalyzes the oxidation of hypoxanthine to xanthine. Catalyzes the oxidation of xanthine to uric acid. This Drosophila pseudoobscura pseudoobscura (Fruit fly) protein is Xanthine dehydrogenase (ry).